Here is a 229-residue protein sequence, read N- to C-terminus: MELLLLSNSTLPGKAWLEHALPLIANQLNGRRSAVFIPFAGVTQTWDEYTDKTAEVLAPLGVNVTGIHRVADPLAAIEKAEIIIVGGGNTFQLLKESRERGLLAPVADRVKRGALYIGWSAGANLACPTIRTTNDMPIVDPNGFDALDLFPLQINPHFTNALPEGHKGETREQRIRELLVVAPELAVIGLPEGNWIQVSNGQAVLGGPNTTWVFKAGEEAVALEAGHRF.

Residues S120, D135, and H157 each act as charge relay system in the active site.

This sequence belongs to the peptidase S51 family.

It localises to the cytoplasm. It catalyses the reaction Dipeptidase E catalyzes the hydrolysis of dipeptides Asp-|-Xaa. It does not act on peptides with N-terminal Glu, Asn or Gln, nor does it cleave isoaspartyl peptides.. In terms of biological role, hydrolyzes dipeptides containing N-terminal aspartate residues. May play a role in allowing the cell to use peptide aspartate to spare carbon otherwise required for the synthesis of the aspartate family of amino acids. The chain is Peptidase E from Salmonella newport (strain SL254).